Reading from the N-terminus, the 129-residue chain is Snaclec rhodocetin subunit beta (129 aa).

The C-type lectin domain occupies Arg-3–Phe-125. Intrachain disulfides connect Cys-4/Cys-15, Cys-32/Cys-123, and Cys-98/Cys-115.

In terms of assembly, heterotetramer of subunit alpha, beta, gamma and delta; only the gamma and the delta subunits are disulfide-linked. Alpha-beta heterodimer and gamma-delta heterodimer associate orthogonally, giving a cruciform conformation. This heterotetramer may covalently dimerizes thanks to the gamma subunit. Expressed by the venom gland.

Its subcellular location is the secreted. Potent inhibitor of collagen-induced platelet aggregation. It acts by binding to the integrin alpha2A domain and blocks collagen binding to integrin alpha-2/beta-1 (ITGA2/ITGB1). The gamma/delta subunits mainly contribute to this activity. This is Snaclec rhodocetin subunit beta from Calloselasma rhodostoma (Malayan pit viper).